Here is a 159-residue protein sequence, read N- to C-terminus: MTVAYIAIGSNLASPLEQVNAALKALGDIPESHILTVSSFYRTPPLGPQDQPDYLNAAVALETSLAPEELLNHTQRIELQQGRVRKAERWGPRTLDLDIMLFGNEVINTERLTVPHYDMKNRGFMLWPLFEIAPELVFPDGEMLRQILHTRAFDKLNKW.

The protein belongs to the HPPK family. In terms of assembly, monomer.

The enzyme catalyses 6-hydroxymethyl-7,8-dihydropterin + ATP = (7,8-dihydropterin-6-yl)methyl diphosphate + AMP + H(+). It functions in the pathway cofactor biosynthesis; tetrahydrofolate biosynthesis; 2-amino-4-hydroxy-6-hydroxymethyl-7,8-dihydropteridine diphosphate from 7,8-dihydroneopterin triphosphate: step 4/4. Its function is as follows. Catalyzes the transfer of pyrophosphate from adenosine triphosphate (ATP) to 6-hydroxymethyl-7,8-dihydropterin, an enzymatic step in folate biosynthesis pathway. The polypeptide is 2-amino-4-hydroxy-6-hydroxymethyldihydropteridine pyrophosphokinase (folK) (Escherichia coli (strain K12)).